The following is a 50-amino-acid chain: Conotoxin Bu13 (50 aa).

A signal peptide is located at residue A1. A propeptide spanning residues 2-24 is cleaved from the precursor; that stretch reads EDSRGTQLHRALRKTTKLSLSIR. Cystine bridges form between C25–C40, C32–C44, and C39–C49.

Belongs to the conotoxin O1 superfamily. Expressed by the venom duct.

It localises to the secreted. The polypeptide is Conotoxin Bu13 (Conus bullatus (Bubble cone)).